The following is a 421-amino-acid chain: Serine protease HTRA2, mitochondrial (421 aa).

Residues 63–81 (VIRFFVPFSLGALASTMVA) traverse the membrane as a helical segment. The IAP-binding signature appears at 74–77 (ALAS). Residues 138 to 301 (SNGSGFVIEQ…IPIDYVKVFL (164 aa)) are serine protease. Catalysis depends on charge relay system residues histidine 156, aspartate 188, and serine 265. Positions 324–409 (MGITMLTLTP…ELDIVILRGV (86 aa)) constitute a PDZ domain.

Belongs to the peptidase S1C family. As to quaternary structure, interacts with th/DIAP1 (via BIR 2 domain).

It localises to the mitochondrion intermembrane space. The protein localises to the mitochondrion membrane. The enzyme catalyses Cleavage of non-polar aliphatic amino-acids at the P1 position, with a preference for Val, Ile and Met. At the P2 and P3 positions, Arg is selected most strongly with a secondary preference for other hydrophilic residues.. Serine protease that shows proteolytic activity against a non-specific substrate beta-casein. Promotes or induces cell death either by direct binding to and inhibition of BIRC proteins (also called inhibitor of apoptosis proteins, IAPs), leading to an increase in caspase activity, or by a BIRC inhibition-independent, caspase-independent and serine protease activity-dependent mechanism. Can antagonize antiapoptotic activity of th/Diap1 by directly inducing the degradation of th/Diap1. This is Serine protease HTRA2, mitochondrial from Drosophila virilis (Fruit fly).